We begin with the raw amino-acid sequence, 475 residues long: MQILFVASEVAPWSKTGGLGDVAGALPRALAERGNEVVVVTPRHGSIDPRAAGLQPVRTSLHVRGEPVALWVKRGPAPVYFVEHPHLFGSRRGLYGDGGRDHPDNAERFAFLTRAALALPGALGLRPRILHLNDWQCGLGPWLLRHEHARDPALAGARTVFTIHNLAYQGLFPKQVLPALGLPWEVFRWEAMEFFDQLSFMKAGLAFADALTTVSPTYAREILTPEGGASLDALLRHRARDLHGILNGIDVHAWDPARDPHLPAHFTPGELAGKAACKAALQREVGLPVRRDAPLAGLVTRLAEQKGIDLVAAALPALLARDVQVVLLGSGDPAYEEAFARAAREHPDRVAARIGFDEGLAHRIEAGADLFLMPSRFEPCGLNQMYSLRYGTVPVVRSVGGLADTVEDFDGFARGTGFRFAEYTPQALLTATRRALDVFRDRRAWRGLVERGMAEDNSWERSAARYEALYRTLAP.

Lys15 is a binding site for ADP-alpha-D-glucose.

Belongs to the glycosyltransferase 1 family. Bacterial/plant glycogen synthase subfamily.

It carries out the reaction [(1-&gt;4)-alpha-D-glucosyl](n) + ADP-alpha-D-glucose = [(1-&gt;4)-alpha-D-glucosyl](n+1) + ADP + H(+). It participates in glycan biosynthesis; glycogen biosynthesis. Synthesizes alpha-1,4-glucan chains using ADP-glucose. The sequence is that of Glycogen synthase from Anaeromyxobacter dehalogenans (strain 2CP-C).